Consider the following 443-residue polypeptide: Signal recognition particle 54 kDa protein (443 aa).

GTP is bound by residues 107–114 (GVQGSGKT), 189–193 (DTAGR), and 247–250 (TKLD).

Belongs to the GTP-binding SRP family. SRP54 subfamily. In terms of assembly, part of the signal recognition particle protein translocation system, which is composed of SRP and FtsY. Archaeal SRP consists of a 7S RNA molecule of 300 nucleotides and two protein subunits: SRP54 and SRP19.

The protein localises to the cytoplasm. The enzyme catalyses GTP + H2O = GDP + phosphate + H(+). Functionally, involved in targeting and insertion of nascent membrane proteins into the cytoplasmic membrane. Binds to the hydrophobic signal sequence of the ribosome-nascent chain (RNC) as it emerges from the ribosomes. The SRP-RNC complex is then targeted to the cytoplasmic membrane where it interacts with the SRP receptor FtsY. The protein is Signal recognition particle 54 kDa protein of Pyrococcus abyssi (strain GE5 / Orsay).